Reading from the N-terminus, the 474-residue chain is tRNA-2-methylthio-N(6)-dimethylallyladenosine synthase (474 aa).

The MTTase N-terminal domain occupies 3-120 (KKLHIKTWGC…LPEMINHVQG (118 aa)). Positions 12, 49, 83, 157, 161, and 164 each coordinate [4Fe-4S] cluster. In terms of domain architecture, Radical SAM core spans 143–375 (RAEGPTAFVS…QQRISQQAME (233 aa)). The TRAM domain maps to 378–441 (RKMVGTVQRV…ASSLRGILLR (64 aa)).

This sequence belongs to the methylthiotransferase family. MiaB subfamily. As to quaternary structure, monomer. [4Fe-4S] cluster is required as a cofactor.

It is found in the cytoplasm. The enzyme catalyses N(6)-dimethylallyladenosine(37) in tRNA + (sulfur carrier)-SH + AH2 + 2 S-adenosyl-L-methionine = 2-methylsulfanyl-N(6)-dimethylallyladenosine(37) in tRNA + (sulfur carrier)-H + 5'-deoxyadenosine + L-methionine + A + S-adenosyl-L-homocysteine + 2 H(+). Its function is as follows. Catalyzes the methylthiolation of N6-(dimethylallyl)adenosine (i(6)A), leading to the formation of 2-methylthio-N6-(dimethylallyl)adenosine (ms(2)i(6)A) at position 37 in tRNAs that read codons beginning with uridine. This Yersinia pestis bv. Antiqua (strain Antiqua) protein is tRNA-2-methylthio-N(6)-dimethylallyladenosine synthase.